The following is a 157-amino-acid chain: Protein Smg homolog (157 aa).

The protein belongs to the Smg family.

In Alkalilimnicola ehrlichii (strain ATCC BAA-1101 / DSM 17681 / MLHE-1), this protein is Protein Smg homolog.